Consider the following 318-residue polypeptide: Malate dehydrogenase (318 aa).

Residues 10–15 (GGGQIG) and Asp-34 each bind NAD(+). Residues Arg-83 and Arg-89 each contribute to the substrate site. Residues Asn-96 and 119 to 121 (LSN) each bind NAD(+). Substrate-binding residues include Asn-121 and Arg-152. Residue His-176 is the Proton acceptor of the active site.

This sequence belongs to the LDH/MDH superfamily. MDH type 3 family.

It carries out the reaction (S)-malate + NAD(+) = oxaloacetate + NADH + H(+). Its function is as follows. Catalyzes the reversible oxidation of malate to oxaloacetate. In Syntrophotalea carbinolica (strain DSM 2380 / NBRC 103641 / GraBd1) (Pelobacter carbinolicus), this protein is Malate dehydrogenase.